Here is a 361-residue protein sequence, read N- to C-terminus: tRNA 2-selenouridine synthase (361 aa).

The Rhodanese domain occupies 12–135 (VLKNIPLIDV…FRRYLIDHLE (124 aa)). Catalysis depends on Cys95, which acts as the S-selanylcysteine intermediate.

Belongs to the SelU family. In terms of assembly, monomer.

The enzyme catalyses 5-methylaminomethyl-2-thiouridine(34) in tRNA + selenophosphate + (2E)-geranyl diphosphate + H2O + H(+) = 5-methylaminomethyl-2-selenouridine(34) in tRNA + (2E)-thiogeraniol + phosphate + diphosphate. It carries out the reaction 5-methylaminomethyl-2-thiouridine(34) in tRNA + (2E)-geranyl diphosphate = 5-methylaminomethyl-S-(2E)-geranyl-thiouridine(34) in tRNA + diphosphate. The catalysed reaction is 5-methylaminomethyl-S-(2E)-geranyl-thiouridine(34) in tRNA + selenophosphate + H(+) = 5-methylaminomethyl-2-(Se-phospho)selenouridine(34) in tRNA + (2E)-thiogeraniol. It catalyses the reaction 5-methylaminomethyl-2-(Se-phospho)selenouridine(34) in tRNA + H2O = 5-methylaminomethyl-2-selenouridine(34) in tRNA + phosphate. In terms of biological role, involved in the post-transcriptional modification of the uridine at the wobble position (U34) of tRNA(Lys), tRNA(Glu) and tRNA(Gln). Catalyzes the conversion of 2-thiouridine (S2U-RNA) to 2-selenouridine (Se2U-RNA). Acts in a two-step process involving geranylation of 2-thiouridine (S2U) to S-geranyl-2-thiouridine (geS2U) and subsequent selenation of the latter derivative to 2-selenouridine (Se2U) in the tRNA chain. In Hydrogenovibrio crunogenus (strain DSM 25203 / XCL-2) (Thiomicrospira crunogena), this protein is tRNA 2-selenouridine synthase.